The following is a 48-amino-acid chain: Acidic phospholipase A2 (48 aa).

Ca(2+)-binding residues include Tyr-27, Gly-29, and Gly-31. A disulfide bond links Cys-28 and Cys-44. His-47 is an active-site residue. Asp-48 is a Ca(2+) binding site.

It belongs to the phospholipase A2 family. Group II subfamily. D49 sub-subfamily. In terms of assembly, monomer. It depends on Ca(2+) as a cofactor. As to expression, expressed by the venom gland.

It is found in the secreted. It carries out the reaction a 1,2-diacyl-sn-glycero-3-phosphocholine + H2O = a 1-acyl-sn-glycero-3-phosphocholine + a fatty acid + H(+). Inhibited by EDTA. Inhibited by Ba(2+), Cu(+), Fe(2+) and Zn(2+) ions and, to a lesser extent, by Mn(2+) and Mg(2+) ions. Functionally, snake venom phospholipase A2 (PLA2) that shows myotoxicity and induces paw edema in mice. Exhibits indirect hemolytic activity. Inhibits platelet aggregation induced by ADP and collagen. PLA2 catalyzes the calcium-dependent hydrolysis of the 2-acyl groups in 3-sn-phosphoglycerides. This is Acidic phospholipase A2 from Bothrops pauloensis (Neuwied's lancehead).